The chain runs to 594 residues: UvrABC system protein C (594 aa).

The region spanning 13–99 is the GIY-YIG domain; the sequence is SSSGVYQYFD…IKQLKPKYNI (87 aa). Positions 205 to 240 constitute a UVR domain; sequence DRLIKELELKMERLSSNLRFEEALIYRDRIAKIQKI.

The protein belongs to the UvrC family. In terms of assembly, interacts with UvrB in an incision complex.

Its subcellular location is the cytoplasm. The UvrABC repair system catalyzes the recognition and processing of DNA lesions. UvrC both incises the 5' and 3' sides of the lesion. The N-terminal half is responsible for the 3' incision and the C-terminal half is responsible for the 5' incision. The polypeptide is UvrABC system protein C (Helicobacter pylori (strain J99 / ATCC 700824) (Campylobacter pylori J99)).